The primary structure comprises 265 residues: MNNPTSDDRLRFQQKCHKSMLNTGAIFKNCKLRNGDVLQEVTESLTEDSEFNYIVNESQNVSTRLIFWNKWIYILCANTSSNITATRIFRLDDDQPWNLESLVAEVCPVDTDNRLAEHAARTAKDTSANELNYESYQEKSRAPFGFAGPFGAMPGSQPMFPSIGASDLYPAGIGGSDMGNDGGMIPTFNHPIFHPENRSRNEQASANRTNIPPGARYDPTGPGDFRGFGRDERKPQFPFKGPRSQFPGEPDNDDFMPPGSSDMFM.

Residues 194–265 (HPENRSRNEQ…MPPGSSDMFM (72 aa)) are disordered.

This sequence belongs to the proteasome inhibitor PI31 family. As to quaternary structure, interacts with the 20S proteasome.

The protein localises to the cytoplasm. It localises to the nucleus. In terms of biological role, may play a role in the establishment of transcriptional silencing boundaries, preventing the propagation of heterochromatic silencing. In Schizosaccharomyces pombe (strain 972 / ATCC 24843) (Fission yeast), this protein is Silencing boundary-establishment protein FUB1-like protein.